Here is a 492-residue protein sequence, read N- to C-terminus: Protein nucleotidyltransferase YdiU (492 aa).

ATP contacts are provided by glycine 101, glycine 103, arginine 104, lysine 124, aspartate 136, glycine 137, arginine 187, and arginine 194. The Proton acceptor role is filled by aspartate 268. Mg(2+)-binding residues include asparagine 269 and aspartate 278. Aspartate 278 serves as a coordination point for ATP.

It belongs to the SELO family. The cofactor is Mg(2+). Mn(2+) is required as a cofactor.

The catalysed reaction is L-seryl-[protein] + ATP = 3-O-(5'-adenylyl)-L-seryl-[protein] + diphosphate. The enzyme catalyses L-threonyl-[protein] + ATP = 3-O-(5'-adenylyl)-L-threonyl-[protein] + diphosphate. It catalyses the reaction L-tyrosyl-[protein] + ATP = O-(5'-adenylyl)-L-tyrosyl-[protein] + diphosphate. It carries out the reaction L-histidyl-[protein] + UTP = N(tele)-(5'-uridylyl)-L-histidyl-[protein] + diphosphate. The catalysed reaction is L-seryl-[protein] + UTP = O-(5'-uridylyl)-L-seryl-[protein] + diphosphate. The enzyme catalyses L-tyrosyl-[protein] + UTP = O-(5'-uridylyl)-L-tyrosyl-[protein] + diphosphate. In terms of biological role, nucleotidyltransferase involved in the post-translational modification of proteins. It can catalyze the addition of adenosine monophosphate (AMP) or uridine monophosphate (UMP) to a protein, resulting in modifications known as AMPylation and UMPylation. The chain is Protein nucleotidyltransferase YdiU from Corynebacterium efficiens (strain DSM 44549 / YS-314 / AJ 12310 / JCM 11189 / NBRC 100395).